A 577-amino-acid polypeptide reads, in one-letter code: Hemagglutinin-neuraminidase (577 aa).

Residues 1–26 (MDRAVSQVALENDEREAKNTWRLIFR) lie on the Intravirion side of the membrane. The helical transmembrane segment at 27-47 (IAILFLTVVTLAISVASLLYS) threads the bilayer. Topologically, residues 48 to 577 (MGASTPSDLV…DDGVREARSG (530 aa)) are virion surface. N119 carries N-linked (GlcNAc...) asparagine; by host glycosylation. The tract at residues 124-152 (GAPIHDPDYIGGIGKELIVDDASDVTSFY) is important for interaction with fusion/F protein. 3 disulfide bridges follow: C172–C196, C186–C247, and C238–C251. Residues 234–239 (NRKSCS) form an involved in neuraminidase activity region. 2 N-linked (GlcNAc...) asparagine; by host glycosylation sites follow: N341 and N433. 2 disulfides stabilise this stretch: C344–C461 and C455–C465. N-linked (GlcNAc...) asparagine; by host glycans are attached at residues N481 and N538. A disulfide bridge links C531 with C542.

It belongs to the paramyxoviruses hemagglutinin-neuraminidase family. In terms of assembly, homotetramer; composed of disulfide-linked homodimers. Interacts with F protein trimer. Interacts with host CG-1B; this interaction inhibits viral adsorption and replication rather than internalization.

It is found in the virion membrane. The protein localises to the host cell membrane. It catalyses the reaction Hydrolysis of alpha-(2-&gt;3)-, alpha-(2-&gt;6)-, alpha-(2-&gt;8)- glycosidic linkages of terminal sialic acid residues in oligosaccharides, glycoproteins, glycolipids, colominic acid and synthetic substrates.. In terms of biological role, mediates the viral entry into the host cell together with fusion/F protein. Attaches the virus to sialic acid-containing cell receptors and thereby initiates infection. Binding of HN protein to the receptor induces a conformational change that allows the F protein to trigger virion/cell membranes fusion. Functionally, neuraminidase activity ensures the efficient spread of the virus by dissociating the mature virions from the neuraminic acid containing glycoproteins. This is Hemagglutinin-neuraminidase (HN) from Newcastle disease virus (strain Chicken/United States/LaSota/46) (NDV).